A 374-amino-acid polypeptide reads, in one-letter code: UDP-N-acetylglucosamine--N-acetylmuramyl-(pentapeptide) pyrophosphoryl-undecaprenol N-acetylglucosamine transferase (374 aa).

Residues 13 to 15 (TGG), asparagine 124, arginine 165, serine 193, and glutamine 294 contribute to the UDP-N-acetyl-alpha-D-glucosamine site.

This sequence belongs to the glycosyltransferase 28 family. MurG subfamily.

It is found in the cell inner membrane. The catalysed reaction is di-trans,octa-cis-undecaprenyl diphospho-N-acetyl-alpha-D-muramoyl-L-alanyl-D-glutamyl-meso-2,6-diaminopimeloyl-D-alanyl-D-alanine + UDP-N-acetyl-alpha-D-glucosamine = di-trans,octa-cis-undecaprenyl diphospho-[N-acetyl-alpha-D-glucosaminyl-(1-&gt;4)]-N-acetyl-alpha-D-muramoyl-L-alanyl-D-glutamyl-meso-2,6-diaminopimeloyl-D-alanyl-D-alanine + UDP + H(+). Its pathway is cell wall biogenesis; peptidoglycan biosynthesis. Its function is as follows. Cell wall formation. Catalyzes the transfer of a GlcNAc subunit on undecaprenyl-pyrophosphoryl-MurNAc-pentapeptide (lipid intermediate I) to form undecaprenyl-pyrophosphoryl-MurNAc-(pentapeptide)GlcNAc (lipid intermediate II). This chain is UDP-N-acetylglucosamine--N-acetylmuramyl-(pentapeptide) pyrophosphoryl-undecaprenol N-acetylglucosamine transferase, found in Rhizobium leguminosarum bv. trifolii (strain WSM2304).